The sequence spans 91 residues: Large ribosomal subunit protein bL27 (91 aa).

Residues 1-25 form a disordered region; that stretch reads MAHKKGAASSNNGRDSESKRLGVKR.

The protein belongs to the bacterial ribosomal protein bL27 family.

The sequence is that of Large ribosomal subunit protein bL27 from Corynebacterium kroppenstedtii (strain DSM 44385 / JCM 11950 / CIP 105744 / CCUG 35717).